A 20-amino-acid chain; its full sequence is Non-specific lipid-transfer protein (20 aa).

Belongs to the plant LTP family. In terms of tissue distribution, leaf.

In terms of biological role, plant non-specific lipid-transfer proteins transfer phospholipids as well as galactolipids across membranes. May play a role in wax or cutin deposition in the cell walls of expanding epidermal cells and certain secretory tissues. The chain is Non-specific lipid-transfer protein from Cannabis sativa (Hemp).